The sequence spans 349 residues: Core protein VP7 (349 aa).

Asparagine 287 carries N-linked (GlcNAc...) asparagine; by host glycosylation.

Belongs to the orbivirus VP7 family. As to quaternary structure, homotrimer that assemble in a complex of 260 capsomers on an inner scaffold composed of VP3.

The protein localises to the virion. In terms of biological role, the VP7 protein is one of the five proteins (with VP1, VP3, VP4, and VP6) which form the inner capsid of the virus. This is Core protein VP7 (Segment-7) from Antilocapra americana (Pronghorn).